Here is a 445-residue protein sequence, read N- to C-terminus: Phosphoglucosamine mutase (445 aa).

Residue Ser102 is the Phosphoserine intermediate of the active site. Positions 102, 241, 243, and 245 each coordinate Mg(2+). The residue at position 102 (Ser102) is a Phosphoserine.

Belongs to the phosphohexose mutase family. Requires Mg(2+) as cofactor. Activated by phosphorylation.

It carries out the reaction alpha-D-glucosamine 1-phosphate = D-glucosamine 6-phosphate. Functionally, catalyzes the conversion of glucosamine-6-phosphate to glucosamine-1-phosphate. This Pectobacterium carotovorum subsp. carotovorum (strain PC1) protein is Phosphoglucosamine mutase.